The following is an 84-amino-acid chain: Anaphase-promoting complex subunit 11 (84 aa).

The RING-type; atypical zinc finger occupies 34 to 77 (CPDCKLPGDDCPLIWGACNHAFHLHCILKWVNSQTSQAHCPMCR).

It belongs to the RING-box family. As to quaternary structure, part of the APC/C complex composed of at least 10 subunits. Interacts with APC2.

It localises to the cytoplasm. Its subcellular location is the nucleus. Its pathway is protein modification; protein ubiquitination. In terms of biological role, component of the anaphase promoting complex/cyclosome (APC/C), a cell cycle-regulated E3 ubiquitin-protein ligase complex that controls progression through mitosis and the G1 phase of the cell cycle. The APC/C complex controls several key steps in the cell cycle by mediating ubiquitination and subsequent degradation of target proteins such as cyclins. The APC/C complex is required for the female gametophyte development and is involved in several aspect of development by controlling cell division and cell elongation. Involved in the control of endoreduplication. May recruit the E2 ubiquitin-conjugating enzymes to the complex. This Arabidopsis thaliana (Mouse-ear cress) protein is Anaphase-promoting complex subunit 11.